Here is a 520-residue protein sequence, read N- to C-terminus: Bifunctional purine biosynthesis protein PurH (520 aa).

Residues 1–146 (MAPVALLSVS…KNHADVAVLT (146 aa)) enclose the MGS-like domain.

It belongs to the PurH family.

The catalysed reaction is (6R)-10-formyltetrahydrofolate + 5-amino-1-(5-phospho-beta-D-ribosyl)imidazole-4-carboxamide = 5-formamido-1-(5-phospho-D-ribosyl)imidazole-4-carboxamide + (6S)-5,6,7,8-tetrahydrofolate. The enzyme catalyses IMP + H2O = 5-formamido-1-(5-phospho-D-ribosyl)imidazole-4-carboxamide. Its pathway is purine metabolism; IMP biosynthesis via de novo pathway; 5-formamido-1-(5-phospho-D-ribosyl)imidazole-4-carboxamide from 5-amino-1-(5-phospho-D-ribosyl)imidazole-4-carboxamide (10-formyl THF route): step 1/1. It participates in purine metabolism; IMP biosynthesis via de novo pathway; IMP from 5-formamido-1-(5-phospho-D-ribosyl)imidazole-4-carboxamide: step 1/1. This Synechococcus sp. (strain CC9605) protein is Bifunctional purine biosynthesis protein PurH.